Here is a 170-residue protein sequence, read N- to C-terminus: Urease accessory protein UreE (170 aa).

Belongs to the UreE family.

The protein localises to the cytoplasm. In terms of biological role, involved in urease metallocenter assembly. Binds nickel. Probably functions as a nickel donor during metallocenter assembly. This chain is Urease accessory protein UreE, found in Helicobacter pylori (strain G27).